The chain runs to 665 residues: Envelope glycoprotein (665 aa).

A signal peptide spans 1–31 (MESTTLSKPFKNQVNPWGPLIVLLILGRVNP). The tract at residues 32–267 (VALGNSPHQV…KITDSGPRVP (236 aa)) is receptor-binding domain (RBD). At 32 to 605 (VALGNSPHQV…FNGSPWFTTL (574 aa)) the chain is on the extracellular side. N43 carries an N-linked (GlcNAc...) asparagine; by host glycan. Cystine bridges form between C77-C129, C103-C118, C104-C114, C152-C172, and C164-C177. D117 contacts Zn(2+). N-linked (GlcNAc...) asparagine; by host glycans are attached at residues N199 and N211. C209 and C215 are joined by a disulfide. Residues 266-307 (VPIGPNPVLSDQRPPSQPRSPPHSNSTPTETPLTLPEPPPAG) are disordered. An N-linked (GlcNAc...) asparagine; by host glycan is attached at N324. Cystine bridges form between C334/C337, C334/C558, C364/C418, C383/C395, C425/C438, and C550/C557. The CXXC motif lies at 334–337 (CWLC). N-linked (GlcNAc...) asparagine; by host glycans are attached at residues N356 and N363. 3 N-linked (GlcNAc...) asparagine; by host glycosylation sites follow: N396, N400, and N432. The tract at residues 470-490 (VSLTLALLLGGLTMGGIAAGI) is fusion peptide. A coiled-coil region spans residues 505-532 (AAVHDDLKEVEKSITNLEKSLTSLSEVV). Residues 533–549 (LQNRRGLDLLFLKEGGL) form an immunosuppression region. The CX6CC motif lies at 550–558 (CAALKEECC). Residues 606 to 626 (ISTIMGPLIVLLLILLLGPCI) traverse the membrane as a helical segment. The S-palmitoyl cysteine; by host moiety is linked to residue C625. Residues 627–665 (LNRLVQFVKDRISVVQALVLTQQYHQLKSIDPEEMESRE) are Cytoplasmic-facing. Residues 650–653 (YHQL) carry the YXXL motif; contains endocytosis signal motif.

In terms of assembly, the mature envelope protein (Env) consists of a trimer of SU-TM heterodimers attached by a labile interchain disulfide bond. Specific enzymatic cleavages in vivo yield mature proteins. Envelope glycoproteins are synthesized as an inactive precursor that is N-glycosylated and processed likely by host cell furin or by a furin-like protease in the Golgi to yield the mature SU and TM proteins. The cleavage site between SU and TM requires the minimal sequence [KR]-X-[KR]-R. The R-peptide is released from the C-terminus of the cytoplasmic tail of the TM protein upon particle formation as a result of proteolytic cleavage by the viral protease. Cleavage of this peptide is required for TM to become fusogenic. In terms of processing, the CXXC motif is highly conserved across a broad range of retroviral envelope proteins. It is thought to participate in the formation of a labile disulfide bond possibly with the CX6CC motif present in the transmembrane protein. Isomerization of the intersubunit disulfide bond to an SU intrachain disulfide bond is thought to occur upon receptor recognition in order to allow membrane fusion. Post-translationally, the transmembrane protein is palmitoylated. The R-peptide is palmitoylated.

The protein localises to the virion membrane. The protein resides in the host cell membrane. The surface protein (SU) attaches the virus to the host cell by binding to its receptor. This interaction triggers the refolding of the transmembrane protein (TM) and is thought to activate its fusogenic potential by unmasking its fusion peptide. Fusion occurs at the host cell plasma membrane. Its function is as follows. The transmembrane protein (TM) acts as a class I viral fusion protein. Under the current model, the protein has at least 3 conformational states: pre-fusion native state, pre-hairpin intermediate state, and post-fusion hairpin state. During viral and target cell membrane fusion, the coiled coil regions (heptad repeats) assume a trimer-of-hairpins structure, positioning the fusion peptide in close proximity to the C-terminal region of the ectodomain. The formation of this structure appears to drive apposition and subsequent fusion of viral and target cell membranes. Membranes fusion leads to delivery of the nucleocapsid into the cytoplasm. This Radiation murine leukemia virus protein is Envelope glycoprotein (env).